A 336-amino-acid polypeptide reads, in one-letter code: MTHPVKAAVFGTGSWGTAFAVILADAGCEVTLWGRRAEVAEAINTTHTNPDYLPGIALPDSVRATTDAAEALRGADFAFLVVPSQTLRANLADWAPHLEPDTVLVSLMKGVELGTAELMSEVIADVAKVPADRIAVVSGPNLAKEIAERRPAAAVVACADESVAQRLQAACHTSYFRPYTNTDVVGCELGGAVKNVIGLAVGIADGMGLGDNTKGSLITRGLAETTRLGLAMGADPLTFSGLAGLGDLVATCSSPLSRNHTFGTNLGRGMTLQETIAVTKQTAEGVKSCESVLDLARRHGVDMPITETVVSIVHEGKSPVVAVKELMSRSAKPERR.

Serine 14, tryptophan 15, arginine 35, arginine 36, and lysine 109 together coordinate NADPH. Sn-glycerol 3-phosphate is bound by residues lysine 109 and glycine 139. Position 143 (alanine 143) interacts with NADPH. Residues lysine 194, aspartate 247, serine 257, arginine 258, and asparagine 259 each coordinate sn-glycerol 3-phosphate. The active-site Proton acceptor is lysine 194. NADPH is bound at residue arginine 258. An NADPH-binding site is contributed by glutamate 284.

This sequence belongs to the NAD-dependent glycerol-3-phosphate dehydrogenase family.

Its subcellular location is the cytoplasm. It carries out the reaction sn-glycerol 3-phosphate + NAD(+) = dihydroxyacetone phosphate + NADH + H(+). The enzyme catalyses sn-glycerol 3-phosphate + NADP(+) = dihydroxyacetone phosphate + NADPH + H(+). Its pathway is membrane lipid metabolism; glycerophospholipid metabolism. Its function is as follows. Catalyzes the reduction of the glycolytic intermediate dihydroxyacetone phosphate (DHAP) to sn-glycerol 3-phosphate (G3P), the key precursor for phospholipid synthesis. The sequence is that of Glycerol-3-phosphate dehydrogenase [NAD(P)+] from Streptomyces griseus subsp. griseus (strain JCM 4626 / CBS 651.72 / NBRC 13350 / KCC S-0626 / ISP 5235).